The primary structure comprises 284 residues: Shikimate dehydrogenase (NADP(+)) (284 aa).

Shikimate-binding positions include 20-22 (SIS) and Ser-67. Catalysis depends on Lys-71, which acts as the Proton acceptor. Position 83 (Asp-83) interacts with NADP(+). Shikimate is bound by residues Asn-92 and Asp-107. Residues 129–133 (GAGGA) and Ile-227 contribute to the NADP(+) site. Residue Tyr-229 coordinates shikimate. Residue Gly-250 coordinates NADP(+).

Belongs to the shikimate dehydrogenase family. Homodimer.

It carries out the reaction shikimate + NADP(+) = 3-dehydroshikimate + NADPH + H(+). It functions in the pathway metabolic intermediate biosynthesis; chorismate biosynthesis; chorismate from D-erythrose 4-phosphate and phosphoenolpyruvate: step 4/7. Its function is as follows. Involved in the biosynthesis of the chorismate, which leads to the biosynthesis of aromatic amino acids. Catalyzes the reversible NADPH linked reduction of 3-dehydroshikimate (DHSA) to yield shikimate (SA). The polypeptide is Shikimate dehydrogenase (NADP(+)) (Streptococcus pneumoniae (strain CGSP14)).